Consider the following 282-residue polypeptide: Energy-coupling factor transporter ATP-binding protein EcfA1 (282 aa).

The region spanning 6-243 is the ABC transporter domain; that stretch reads VTVKHLSFTY…EVLIKSAGLE (238 aa). 40-47 contacts ATP; it reads GHNGSGKS.

It belongs to the ABC transporter superfamily. Energy-coupling factor EcfA family. In terms of assembly, forms a stable energy-coupling factor (ECF) transporter complex composed of 2 membrane-embedded substrate-binding proteins (S component), 2 ATP-binding proteins (A component) and 2 transmembrane proteins (T component).

Its subcellular location is the cell membrane. ATP-binding (A) component of a common energy-coupling factor (ECF) ABC-transporter complex. Unlike classic ABC transporters this ECF transporter provides the energy necessary to transport a number of different substrates. The sequence is that of Energy-coupling factor transporter ATP-binding protein EcfA1 from Lactobacillus johnsonii (strain CNCM I-12250 / La1 / NCC 533).